The primary structure comprises 270 residues: Regulatory protein RecX (270 aa).

It belongs to the RecX family.

Its subcellular location is the cytoplasm. Modulates RecA activity. This is Regulatory protein RecX from Bacillus cereus (strain 03BB102).